A 277-amino-acid polypeptide reads, in one-letter code: Phosphatidylglycerol--prolipoprotein diacylglyceryl transferase (277 aa).

The next 4 membrane-spanning stretches (helical) occupy residues 18–38 (ISVK…LLLA), 51–71 (IIVD…RIYY), 89–109 (IWHG…TAVI), and 116–136 (ISFW…QAIG). Arg-137 is a binding site for a 1,2-diacyl-sn-glycero-3-phospho-(1'-sn-glycerol). 3 helical membrane-spanning segments follow: residues 177-197 (QPTF…LLII), 205-225 (GELF…IEGM), and 235-255 (FRVS…LIIY).

The protein belongs to the Lgt family.

The protein resides in the cell membrane. The enzyme catalyses L-cysteinyl-[prolipoprotein] + a 1,2-diacyl-sn-glycero-3-phospho-(1'-sn-glycerol) = an S-1,2-diacyl-sn-glyceryl-L-cysteinyl-[prolipoprotein] + sn-glycerol 1-phosphate + H(+). It functions in the pathway protein modification; lipoprotein biosynthesis (diacylglyceryl transfer). Its function is as follows. Catalyzes the transfer of the diacylglyceryl group from phosphatidylglycerol to the sulfhydryl group of the N-terminal cysteine of a prolipoprotein, the first step in the formation of mature lipoproteins. The protein is Phosphatidylglycerol--prolipoprotein diacylglyceryl transferase of Listeria innocua serovar 6a (strain ATCC BAA-680 / CLIP 11262).